Reading from the N-terminus, the 336-residue chain is Formimidoylglutamase (336 aa).

Mn(2+)-binding residues include His129, Asp160, His162, Asp164, Asp257, and Asp259.

This sequence belongs to the arginase family. Mn(2+) serves as cofactor.

It catalyses the reaction N-formimidoyl-L-glutamate + H2O = formamide + L-glutamate. It participates in amino-acid degradation; L-histidine degradation into L-glutamate; L-glutamate from N-formimidoyl-L-glutamate (hydrolase route): step 1/1. Its function is as follows. Catalyzes the conversion of N-formimidoyl-L-glutamate to L-glutamate and formamide. The protein is Formimidoylglutamase of Vibrio vulnificus (strain YJ016).